Here is a 162-residue protein sequence, read N- to C-terminus: Photosystem II extrinsic protein V (162 aa).

The first 26 residues, 1-26, serve as a signal peptide directing secretion; the sequence is MLKRYMLLAVATVFFAFQVLTSTATA. 4 residues coordinate heme c: C62, C65, H66, and H117.

It belongs to the cytochrome c family. PsbV subfamily. As to quaternary structure, PSII is composed of 1 copy each of membrane proteins PsbA, PsbB, PsbC, PsbD, PsbE, PsbF, PsbH, PsbI, PsbJ, PsbK, PsbL, PsbM, PsbT, PsbX, PsbY, PsbZ, Psb30/Ycf12, peripheral proteins PsbO, CyanoQ (PsbQ), PsbU, PsbV and a large number of cofactors. It forms dimeric complexes. Requires heme c as cofactor.

The protein resides in the cellular thylakoid membrane. One of the extrinsic, lumenal subunits of photosystem II (PSII). PSII is a light-driven water plastoquinone oxidoreductase, using light energy to abstract electrons from H(2)O, generating a proton gradient subsequently used for ATP formation. The extrinsic proteins stabilize the structure of photosystem II oxygen-evolving complex (OEC), the ion environment of oxygen evolution and protect the OEC against heat-induced inactivation. Low-potential cytochrome c that plays a role in the OEC of PSII. The protein is Photosystem II extrinsic protein V of Acaryochloris marina (strain MBIC 11017).